A 262-amino-acid chain; its full sequence is 2-keto-4-pentenoate hydratase 2 (262 aa).

It belongs to the hydratase/decarboxylase family. MhpD subfamily. Requires a divalent metal cation as cofactor.

The catalysed reaction is (S)-4-hydroxy-2-oxopentanoate = (2Z)-2-hydroxypenta-2,4-dienoate + H2O. It functions in the pathway aromatic compound metabolism; 3-phenylpropanoate degradation. In terms of biological role, catalyzes the conversion of 2-hydroxypentadienoic acid (enolic form of 2-oxopent-4-enoate) to 4-hydroxy-2-ketopentanoic acid. This is 2-keto-4-pentenoate hydratase 2 from Dechloromonas aromatica (strain RCB).